A 308-amino-acid chain; its full sequence is Aspartate carbamoyltransferase catalytic subunit (308 aa).

R57 and T58 together coordinate carbamoyl phosphate. K86 contacts L-aspartate. Carbamoyl phosphate-binding residues include R107, H135, and Q138. L-aspartate contacts are provided by R168 and R229. Residues L268 and P269 each coordinate carbamoyl phosphate.

The protein belongs to the aspartate/ornithine carbamoyltransferase superfamily. ATCase family. In terms of assembly, heterooligomer of catalytic and regulatory chains.

It catalyses the reaction carbamoyl phosphate + L-aspartate = N-carbamoyl-L-aspartate + phosphate + H(+). It functions in the pathway pyrimidine metabolism; UMP biosynthesis via de novo pathway; (S)-dihydroorotate from bicarbonate: step 2/3. Functionally, catalyzes the condensation of carbamoyl phosphate and aspartate to form carbamoyl aspartate and inorganic phosphate, the committed step in the de novo pyrimidine nucleotide biosynthesis pathway. This is Aspartate carbamoyltransferase catalytic subunit from Pyrococcus furiosus (strain ATCC 43587 / DSM 3638 / JCM 8422 / Vc1).